The following is a 1025-amino-acid chain: Multidrug resistance protein MdtC (1025 aa).

12 consecutive transmembrane segments (helical) span residues 3–23 (FFAL…AITL), 333–353 (EVEQ…FLFL), 360–380 (IIPA…MYLC), 387–407 (LSLM…IVVL), 431–451 (VGFT…PLLL), 463–483 (FAVT…TLTP), 528–548 (LVGV…ISIP), 853–873 (VILI…LYES), 875–895 (VHPL…LLAL), 897–917 (LFNA…IGIV), 953–973 (PIMM…LSGG), and 984–1004 (ITIV…TPVV).

The protein belongs to the resistance-nodulation-cell division (RND) (TC 2.A.6) family. MdtC subfamily. As to quaternary structure, part of a tripartite efflux system composed of MdtA, MdtB and MdtC. MdtC forms a heteromultimer with MdtB.

Its subcellular location is the cell inner membrane. The MdtABC tripartite complex confers resistance against novobiocin and deoxycholate. The protein is Multidrug resistance protein MdtC of Escherichia coli O17:K52:H18 (strain UMN026 / ExPEC).